The following is a 285-amino-acid chain: 2,3,4,5-tetrahydropyridine-2,6-dicarboxylate N-succinyltransferase (285 aa).

Belongs to the transferase hexapeptide repeat family.

It is found in the cytoplasm. The catalysed reaction is (S)-2,3,4,5-tetrahydrodipicolinate + succinyl-CoA + H2O = (S)-2-succinylamino-6-oxoheptanedioate + CoA. It functions in the pathway amino-acid biosynthesis; L-lysine biosynthesis via DAP pathway; LL-2,6-diaminopimelate from (S)-tetrahydrodipicolinate (succinylase route): step 1/3. The polypeptide is 2,3,4,5-tetrahydropyridine-2,6-dicarboxylate N-succinyltransferase (Beijerinckia indica subsp. indica (strain ATCC 9039 / DSM 1715 / NCIMB 8712)).